Reading from the N-terminus, the 629-residue chain is Phosphomethylpyrimidine synthase (629 aa).

The segment at 1–24 (MSTKPKNAAHLSESAQVDSGSVQP) is disordered. Polar residues predominate over residues 13–24 (ESAQVDSGSVQP). Substrate is bound by residues asparagine 233, methionine 262, tyrosine 291, histidine 327, 347–349 (SRG), 388–391 (DGLR), and glutamate 427. Histidine 431 contacts Zn(2+). Tyrosine 454 contacts substrate. Residue histidine 495 participates in Zn(2+) binding. Positions 575, 578, and 583 each coordinate [4Fe-4S] cluster.

It belongs to the ThiC family. As to quaternary structure, homodimer. It depends on [4Fe-4S] cluster as a cofactor.

It catalyses the reaction 5-amino-1-(5-phospho-beta-D-ribosyl)imidazole + S-adenosyl-L-methionine = 4-amino-2-methyl-5-(phosphooxymethyl)pyrimidine + CO + 5'-deoxyadenosine + formate + L-methionine + 3 H(+). It participates in cofactor biosynthesis; thiamine diphosphate biosynthesis. In terms of biological role, catalyzes the synthesis of the hydroxymethylpyrimidine phosphate (HMP-P) moiety of thiamine from aminoimidazole ribotide (AIR) in a radical S-adenosyl-L-methionine (SAM)-dependent reaction. The chain is Phosphomethylpyrimidine synthase from Pseudomonas syringae pv. tomato (strain ATCC BAA-871 / DC3000).